We begin with the raw amino-acid sequence, 89 residues long: Cell division protein ZapA (89 aa).

This sequence belongs to the ZapA family. Type 2 subfamily. Homodimer. Interacts with FtsZ.

It is found in the cytoplasm. Activator of cell division through the inhibition of FtsZ GTPase activity, therefore promoting FtsZ assembly into bundles of protofilaments necessary for the formation of the division Z ring. It is recruited early at mid-cell but it is not essential for cell division. This Bacillus thuringiensis (strain Al Hakam) protein is Cell division protein ZapA.